Reading from the N-terminus, the 101-residue chain is Urease subunit beta (101 aa).

Belongs to the urease beta subunit family. As to quaternary structure, heterotrimer of UreA (gamma), UreB (beta) and UreC (alpha) subunits. Three heterotrimers associate to form the active enzyme.

It is found in the cytoplasm. The catalysed reaction is urea + 2 H2O + H(+) = hydrogencarbonate + 2 NH4(+). It participates in nitrogen metabolism; urea degradation; CO(2) and NH(3) from urea (urease route): step 1/1. This is Urease subunit beta from Ruegeria sp. (strain TM1040) (Silicibacter sp.).